The following is a 371-amino-acid chain: RxLR effector protein PITG_12731 (371 aa).

The signal sequence occupies residues 1 to 24; it reads MRFYSVLLTIVTLIASTYDAKVNA. A RxLR-dEER motif is present at residues 43 to 53; the sequence is RMLRADHADER.

The protein belongs to the RxLR effector family.

Its subcellular location is the secreted. The protein resides in the host nucleus. It is found in the host cytoplasm. Its function is as follows. Effector that enhances P.infestans colonization of Nicotiana benthamiana leaves. The protein is RxLR effector protein PITG_12731 of Phytophthora infestans (strain T30-4) (Potato late blight agent).